A 127-amino-acid chain; its full sequence is Aspartate 1-decarboxylase (127 aa).

The active-site Schiff-base intermediate with substrate; via pyruvic acid is Ser-25. At Ser-25 the chain carries Pyruvic acid (Ser). Thr-57 lines the substrate pocket. The Proton donor role is filled by Tyr-58. Substrate is bound at residue 73–75 (GAA).

Belongs to the PanD family. Heterooctamer of four alpha and four beta subunits. It depends on pyruvate as a cofactor. Is synthesized initially as an inactive proenzyme, which is activated by self-cleavage at a specific serine bond to produce a beta-subunit with a hydroxyl group at its C-terminus and an alpha-subunit with a pyruvoyl group at its N-terminus.

The protein localises to the cytoplasm. The catalysed reaction is L-aspartate + H(+) = beta-alanine + CO2. It participates in cofactor biosynthesis; (R)-pantothenate biosynthesis; beta-alanine from L-aspartate: step 1/1. In terms of biological role, catalyzes the pyruvoyl-dependent decarboxylation of aspartate to produce beta-alanine. The protein is Aspartate 1-decarboxylase of Desulfitobacterium hafniense (strain DSM 10664 / DCB-2).